A 206-amino-acid chain; its full sequence is 21.9 kDa heat shock protein (206 aa).

The first 29 residues, 1-29 (MAAVAEREVLGMVAAVAAMVVMMAPPAAA), serve as a signal peptide directing secretion. A sHSP domain is found at 65-187 (EPAAVALARC…GREPRVVAID (123 aa)). Residues 94 to 96 (RGD) carry the Cell attachment site motif.

This sequence belongs to the small heat shock protein (HSP20) family. As to quaternary structure, may form oligomeric structures.

It localises to the endoplasmic reticulum. This chain is 21.9 kDa heat shock protein (HSP21.9), found in Oryza sativa subsp. japonica (Rice).